A 353-amino-acid polypeptide reads, in one-letter code: Photosystem II protein D1 (353 aa).

Threonine 2 is modified (N-acetylthreonine). Threonine 2 carries the post-translational modification Phosphothreonine. The next 3 helical transmembrane spans lie at 29–46 (YIGW…TATS), 118–133 (HFLL…EWEL), and 142–156 (WIAV…AAAA). Histidine 118 provides a ligand contact to chlorophyll a. Tyrosine 126 is a pheophytin a binding site. 2 residues coordinate [CaMn4O5] cluster: aspartate 170 and glutamate 189. A helical transmembrane segment spans residues 197-218 (FHMLGVAGVFGGSLFSAMHGSL). Residue histidine 198 coordinates chlorophyll a. A quinone is bound by residues histidine 215 and 264–265 (SF). Histidine 215 is a binding site for Fe cation. Position 272 (histidine 272) interacts with Fe cation. The helical transmembrane segment at 274-288 (FLAAWPVVGIWFTAL) threads the bilayer. [CaMn4O5] cluster-binding residues include histidine 332, glutamate 333, aspartate 342, and alanine 344. Residues 345-353 (AVEAPSING) constitute a propeptide that is removed on maturation.

The protein belongs to the reaction center PufL/M/PsbA/D family. In terms of assembly, PSII is composed of 1 copy each of membrane proteins PsbA, PsbB, PsbC, PsbD, PsbE, PsbF, PsbH, PsbI, PsbJ, PsbK, PsbL, PsbM, PsbT, PsbX, PsbY, PsbZ, Psb30/Ycf12, at least 3 peripheral proteins of the oxygen-evolving complex and a large number of cofactors. It forms dimeric complexes. The D1/D2 heterodimer binds P680, chlorophylls that are the primary electron donor of PSII, and subsequent electron acceptors. It shares a non-heme iron and each subunit binds pheophytin, quinone, additional chlorophylls, carotenoids and lipids. D1 provides most of the ligands for the Mn4-Ca-O5 cluster of the oxygen-evolving complex (OEC). There is also a Cl(-1) ion associated with D1 and D2, which is required for oxygen evolution. The PSII complex binds additional chlorophylls, carotenoids and specific lipids. is required as a cofactor. Post-translationally, tyr-161 forms a radical intermediate that is referred to as redox-active TyrZ, YZ or Y-Z. In terms of processing, C-terminally processed by CTPA; processing is essential to allow assembly of the oxygen-evolving complex and thus photosynthetic growth.

It is found in the plastid. The protein localises to the chloroplast thylakoid membrane. The enzyme catalyses 2 a plastoquinone + 4 hnu + 2 H2O = 2 a plastoquinol + O2. In terms of biological role, photosystem II (PSII) is a light-driven water:plastoquinone oxidoreductase that uses light energy to abstract electrons from H(2)O, generating O(2) and a proton gradient subsequently used for ATP formation. It consists of a core antenna complex that captures photons, and an electron transfer chain that converts photonic excitation into a charge separation. The D1/D2 (PsbA/PsbD) reaction center heterodimer binds P680, the primary electron donor of PSII as well as several subsequent electron acceptors. In Vitis vinifera (Grape), this protein is Photosystem II protein D1.